We begin with the raw amino-acid sequence, 97 residues long: Small cell adhesion glycoprotein (97 aa).

Topologically, residues M1–L36 are extracellular. O-linked (GalNAc...) threonine glycosylation is present at T7. S9 is a glycosylation site (O-linked (GalNAc...) serine). O-linked (GalNAc...) threonine glycosylation is found at T15, T16, and T24. O-linked (GalNAc...) serine glycosylation is present at S26. The helical; Signal-anchor for type III membrane protein transmembrane segment at I37 to F57 threads the bilayer. The Cytoplasmic portion of the chain corresponds to Y58 to I97.

It belongs to the SMAGP family. Post-translationally, O-glycosylated. The O-glycan is modified with sialic acid residues. Detected in brain (at protein level). Highly expressed in kidney and placenta. Detected in skin, breast, heart, lung, liver, prostate, spleen, small intestine, colon and stomach.

It localises to the cell membrane. The protein resides in the cytoplasmic vesicle membrane. In terms of biological role, may play a role in epithelial cell-cell contacts. May play a role in tumor invasiveness and metastasis formation. In Rattus norvegicus (Rat), this protein is Small cell adhesion glycoprotein (Smagp).